The sequence spans 495 residues: Trimethylamine methyltransferase MttB (495 aa).

Residue pyrrolysine 334 is a non-standard amino acid, pyrrolysine.

This sequence belongs to the trimethylamine methyltransferase family.

The enzyme catalyses Co(I)-[trimethylamine-specific corrinoid protein] + trimethylamine + H(+) = methyl-Co(III)-[trimethylamine-specific corrinoid protein] + dimethylamine. It functions in the pathway one-carbon metabolism; methanogenesis from trimethylamine. Functionally, catalyzes the transfer of a methyl group from trimethylamine to the corrinoid cofactor of MttC. This is Trimethylamine methyltransferase MttB (mttB) from Methanosarcina barkeri (strain Fusaro / DSM 804).